The sequence spans 906 residues: DNA gyrase subunit A (906 aa).

The region spanning 35-524 is the Topo IIA-type catalytic domain; that stretch reads IPDVRDGLKP…GEFDQDIEDL (490 aa). The active-site O-(5'-phospho-DNA)-tyrosine intermediate is the Tyr-123. The short motif at 551–557 is the GyrA-box element; that stretch reads QKRGGKG. A disordered region spans residues 886–906; the sequence is SESEEDSELEEDLEQAEEVYT.

The protein belongs to the type II topoisomerase GyrA/ParC subunit family. Heterotetramer, composed of two GyrA and two GyrB chains. In the heterotetramer, GyrA contains the active site tyrosine that forms a transient covalent intermediate with DNA, while GyrB binds cofactors and catalyzes ATP hydrolysis.

Its subcellular location is the cytoplasm. The enzyme catalyses ATP-dependent breakage, passage and rejoining of double-stranded DNA.. In terms of biological role, a type II topoisomerase that negatively supercoils closed circular double-stranded (ds) DNA in an ATP-dependent manner to modulate DNA topology and maintain chromosomes in an underwound state. Negative supercoiling favors strand separation, and DNA replication, transcription, recombination and repair, all of which involve strand separation. Also able to catalyze the interconversion of other topological isomers of dsDNA rings, including catenanes and knotted rings. Type II topoisomerases break and join 2 DNA strands simultaneously in an ATP-dependent manner. This chain is DNA gyrase subunit A, found in Rickettsia felis (strain ATCC VR-1525 / URRWXCal2) (Rickettsia azadi).